The chain runs to 915 residues: MLEEEYTLDYFRSEGFERKVCKSCGAAFWTRDPEQEFCGDAPCVTYNFIGNPVFKPHNVSEMREAFLSFFERHGHTRLERYPVAARWRDDIYLTIASIADFQPFVTSGVVPPPANPLTISQPCIRLNDLDSVGRSGRHLTLFEMMAHHAFNTPEEQIYWKDQTVALCDEFIKSIGGDPARVSYKEHPWYGGGNAGASVEVLIGGLEVATLVFMNLGRQKTDQPPVDVNGVPYYPMRLNIVDTGYGLERLVWASKGSPTIYDAVFPEMVSRLMRSARLEDLLDNPEFTKIMGLSARFAGVMDISGTNLYNLRRKVAEAIDVPVERLERIVVPIEKVYSIADHTRCLAYMLGDCIVPSNVREGYLARLVLRRTLRMMNDLSMDDALTDLIEAQMQVVGAENFEQDVDAVREIVENEEARYASTLERGARIVQKIARNYRAKSSRVPLEEVITLYDSHGIPPEMVKEVAAAEGAVVEIPDNFYSLIAETHSEAQKEARGEDPLDAYRERAVSLPPTKKLYYELPNEVEFEAMVLDYFDGMAVLDQTLFYPEGGGQPSDTGTLVTSESMVRVEEVVKLGEVILHRVTGGPLMRGDRVKGMVDEERRWSLMRHHTATHVLLHAAQQVLGVHVHQAGAQKGSEVSRLDIRHYRHITPDELRRIELEANRLVMADTPVYIHVEERTKAEQKYGFGLYQGGVPPGREIRTVQVGADVQACAGTHVRTTGEIGPIRVLGVEHIQDGVERLVFAAGIAAVHAVQHLGDLLQESADMVSVQPENLPATVARFFSEWKEQKKEIERLQKKVVDLEMQNLDGEVVDGVRVVVRTLDATHKELVALATTVADEGGVALFASSDGTVKVVATSGAPTVNAVDIVREVCGILGGKGGGKPNLAQGAGPDASRLEEALEYGRNRIIEALHGE.

Histidine 609, histidine 613, cysteine 712, and histidine 716 together coordinate Zn(2+).

Belongs to the class-II aminoacyl-tRNA synthetase family. Zn(2+) serves as cofactor.

It localises to the cytoplasm. The catalysed reaction is tRNA(Ala) + L-alanine + ATP = L-alanyl-tRNA(Ala) + AMP + diphosphate. In terms of biological role, catalyzes the attachment of alanine to tRNA(Ala) in a two-step reaction: alanine is first activated by ATP to form Ala-AMP and then transferred to the acceptor end of tRNA(Ala). Also edits incorrectly charged Ser-tRNA(Ala) and Gly-tRNA(Ala) via its editing domain. This is Alanine--tRNA ligase from Methanoculleus marisnigri (strain ATCC 35101 / DSM 1498 / JR1).